Consider the following 218-residue polypeptide: MAMFEQMRANVGKLLKGIDRYNPENLATLERYVETQAKENAYDLEANLAVLKLYQFNPAFFQTTVTAQILLKALTNLPHTDFTLCKCMIDQAHQEERPIRQILYLGDLLETCHFQAFWQALDENMDLLEGITGFEDSVRKFICHVVGITYQHIDRWLLAEMLGDLSDSQLKVWMSKYGWSADESGQIFICSQEESIKPKNIVEKIDFDSVSSIMASSQ.

Ala2 carries the post-translational modification N-acetylalanine. Thr28 carries the post-translational modification Phosphothreonine. The region spanning 42 to 204 is the PCI domain; that stretch reads YDLEANLAVL…SIKPKNIVEK (163 aa). Ser217 carries the phosphoserine modification.

Component of the eukaryotic translation initiation factor 3 (eIF-3) complex, which is composed of 13 subunits: EIF3A, EIF3B, EIF3C, EIF3D, EIF3E, EIF3F, EIF3G, EIF3H, EIF3I, EIF3J, EIF3K, EIF3L and EIF3M. The eIF-3 complex appears to include 3 stable modules: module A is composed of EIF3A, EIF3B, EIF3G and EIF3I; module B is composed of EIF3F, EIF3H, and EIF3M; and module C is composed of EIF3C, EIF3D, EIF3E, EIF3K and EIF3L. EIF3C of module C binds EIF3B of module A and EIF3H of module B, thereby linking the three modules. EIF3J is a labile subunit that binds to the eIF-3 complex via EIF3B. The eIF-3 complex interacts with RPS6KB1 under conditions of nutrient depletion. Mitogenic stimulation leads to binding and activation of a complex composed of MTOR and RPTOR, leading to phosphorylation and release of RPS6KB1 and binding of EIF4B to eIF-3. Interacts with CCND3, but not with CCND1 and CCND2. As to expression, ubiquitous, with the highest levels of expression in brain, testis and kidney.

It localises to the nucleus. The protein localises to the cytoplasm. In terms of biological role, component of the eukaryotic translation initiation factor 3 (eIF-3) complex, which is required for several steps in the initiation of protein synthesis. The eIF-3 complex associates with the 40S ribosome and facilitates the recruitment of eIF-1, eIF-1A, eIF-2:GTP:methionyl-tRNAi and eIF-5 to form the 43S pre-initiation complex (43S PIC). The eIF-3 complex stimulates mRNA recruitment to the 43S PIC and scanning of the mRNA for AUG recognition. The eIF-3 complex is also required for disassembly and recycling of post-termination ribosomal complexes and subsequently prevents premature joining of the 40S and 60S ribosomal subunits prior to initiation. The eIF-3 complex specifically targets and initiates translation of a subset of mRNAs involved in cell proliferation, including cell cycling, differentiation and apoptosis, and uses different modes of RNA stem-loop binding to exert either translational activation or repression. In Homo sapiens (Human), this protein is Eukaryotic translation initiation factor 3 subunit K.